A 62-amino-acid polypeptide reads, in one-letter code: Photosystem II reaction center protein Z (62 aa).

2 helical membrane passes run alanine 8–serine 28 and phenylalanine 41–isoleucine 61.

It belongs to the PsbZ family. PSII is composed of 1 copy each of membrane proteins PsbA, PsbB, PsbC, PsbD, PsbE, PsbF, PsbH, PsbI, PsbJ, PsbK, PsbL, PsbM, PsbT, PsbY, PsbZ, Psb30/Ycf12, at least 3 peripheral proteins of the oxygen-evolving complex and a large number of cofactors. It forms dimeric complexes.

Its subcellular location is the plastid. The protein localises to the chloroplast thylakoid membrane. Functionally, may control the interaction of photosystem II (PSII) cores with the light-harvesting antenna, regulates electron flow through the 2 photosystem reaction centers. PSII is a light-driven water plastoquinone oxidoreductase, using light energy to abstract electrons from H(2)O, generating a proton gradient subsequently used for ATP formation. The protein is Photosystem II reaction center protein Z of Populus alba (White poplar).